A 127-amino-acid polypeptide reads, in one-letter code: MLQLLLAVFIGGGTGSVARWMLSMRFNPLHQAIPLGTLAANLLGAFIIGMGFAWFSRMTNIDPVWKVLITTGFCGGLTTFSTFSAEVVFLLQEGRFGWAMLNVLVNLLGSFAMTALAFWIFSASTAN.

The next 4 helical transmembrane spans lie at 4–24, 35–55, 71–91, and 103–123; these read LLLA…MLSM, LGTL…FAWF, TGFC…VFLL, and VLVN…IFSA. 2 residues coordinate Na(+): glycine 75 and threonine 78.

The protein belongs to the fluoride channel Fluc/FEX (TC 1.A.43) family.

The protein resides in the cell inner membrane. The enzyme catalyses fluoride(in) = fluoride(out). With respect to regulation, na(+) is not transported, but it plays an essential structural role and its presence is essential for fluoride channel function. Fluoride-specific ion channel. Important for reducing fluoride concentration in the cell, thus reducing its toxicity. The protein is Fluoride-specific ion channel FluC of Escherichia fergusonii (strain ATCC 35469 / DSM 13698 / CCUG 18766 / IAM 14443 / JCM 21226 / LMG 7866 / NBRC 102419 / NCTC 12128 / CDC 0568-73).